A 296-amino-acid chain; its full sequence is Glycine--tRNA ligase alpha subunit (296 aa).

The protein belongs to the class-II aminoacyl-tRNA synthetase family. Tetramer of two alpha and two beta subunits.

The protein resides in the cytoplasm. It carries out the reaction tRNA(Gly) + glycine + ATP = glycyl-tRNA(Gly) + AMP + diphosphate. The protein is Glycine--tRNA ligase alpha subunit of Desulfitobacterium hafniense (strain DSM 10664 / DCB-2).